The sequence spans 486 residues: Hexokinase-2 (486 aa).

Ser15 is modified (phosphoserine). The 449-residue stretch at 21-469 folds into the Hexokinase domain; it reads KELMQQIENF…SGAGAAVIAA (449 aa). Thr38 carries the post-translational modification Phosphothreonine. The tract at residues 75 to 209 is hexokinase small subdomain; it reads TGKESGDFLA…NIPIEVVALI (135 aa). ATP contacts are provided by residues 86 to 91 and Lys111; that span reads DLGGTN. Ser158 carries the post-translational modification Phosphoserine. Substrate-binding positions include Ser158, 175-176, 210-211, and Asn237; these read TK and ND. The hexokinase large subdomain stretch occupies residues 210–458; it reads NDTTGTLVAS…YPIKIVPAED (249 aa). Ser245 carries the post-translational modification Phosphoserine. A substrate-binding site is contributed by Glu269. A Phosphoserine modification is found at Ser272. Glu302 is a substrate binding site. Residues 307–308, 344–348, and 419–423 contribute to the ATP site; these read GY, TSYPA, and SVYNR.

It belongs to the hexokinase family. As to quaternary structure, homodimer.

The catalysed reaction is a D-hexose + ATP = a D-hexose 6-phosphate + ADP + H(+). It catalyses the reaction D-fructose + ATP = D-fructose 6-phosphate + ADP + H(+). The enzyme catalyses D-glucose + ATP = D-glucose 6-phosphate + ADP + H(+). The protein operates within carbohydrate metabolism; hexose metabolism. Its pathway is carbohydrate degradation; glycolysis; D-glyceraldehyde 3-phosphate and glycerone phosphate from D-glucose: step 1/4. With respect to regulation, subject to allosteric control. Substrate inhibition by ATP. Catalyzes the phosphorylation of hexose, such as D-glucose and D-fructose, to hexose 6-phosphate (D-glucose 6-phosphate and D-fructose 6-phosphate, respectively). Mediates the initial step of glycolysis by catalyzing phosphorylation of D-glucose to D-glucose 6-phosphate. The chain is Hexokinase-2 (HXK2) from Saccharomyces cerevisiae (strain ATCC 204508 / S288c) (Baker's yeast).